A 344-amino-acid chain; its full sequence is tRNA(Ile)-lysidine synthase (344 aa).

Residue 30–35 (SGGQDS) participates in ATP binding. The tract at residues 323–344 (PPPPAPVPPDPGERSPPPSPLY) is disordered.

It belongs to the tRNA(Ile)-lysidine synthase family.

It localises to the cytoplasm. The catalysed reaction is cytidine(34) in tRNA(Ile2) + L-lysine + ATP = lysidine(34) in tRNA(Ile2) + AMP + diphosphate + H(+). In terms of biological role, ligates lysine onto the cytidine present at position 34 of the AUA codon-specific tRNA(Ile) that contains the anticodon CAU, in an ATP-dependent manner. Cytidine is converted to lysidine, thus changing the amino acid specificity of the tRNA from methionine to isoleucine. This is tRNA(Ile)-lysidine synthase from Thermosynechococcus vestitus (strain NIES-2133 / IAM M-273 / BP-1).